Reading from the N-terminus, the 186-residue chain is Cytochrome c oxidase subunit 4, mitochondrial (186 aa).

The N-terminal 31 residues, 1–31 (MLLSRTAVAVARRATAAPALRRSIATTVVRC), are a transit peptide targeting the mitochondrion. Residues Cys118, His126, Cys142, and Cys145 each coordinate Zn(2+).

It belongs to the cytochrome c oxidase subunit 5B family. In terms of assembly, component of the cytochrome c oxidase (complex IV, CIV), a multisubunit enzyme composed of 11 subunits. The complex is composed of a catalytic core of 3 subunits Cox1, Cox2 and Cox3, encoded in the mitochondrial DNA, and 8 supernumerary subunits Cox4, Cox5a/Cox5, Cox6, Cox7, Cox8, Cox7a/Cox9, Cox6b/Cox12 and Cox6a/Cox13, which are encoded in the nuclear genome. The complex exists as a monomer or a dimer and forms respiratory supercomplexes (SCs) in the inner mitochondrial membrane with NADH-ubiquinone oxidoreductase (complex I, CI) and ubiquinol-cytochrome c oxidoreductase (cytochrome b-c1 complex, complex III, CIII), resulting in various different assemblies (supercomplexes I(1)IV(1), I(1)III(3)IV(2), III(2)IV(1) and III(2)IV(2) as well as larger supercomplexes of compositions like I(1)III(2)IV(5-6)).

The protein resides in the mitochondrion inner membrane. It participates in energy metabolism; oxidative phosphorylation. Functionally, component of the cytochrome c oxidase, the last enzyme in the mitochondrial electron transport chain which drives oxidative phosphorylation. The respiratory chain contains 3 multisubunit complexes succinate dehydrogenase (complex II, CII), ubiquinol-cytochrome c oxidoreductase (cytochrome b-c1 complex, complex III, CIII) and cytochrome c oxidase (complex IV, CIV), that cooperate to transfer electrons derived from NADH and succinate to molecular oxygen, creating an electrochemical gradient over the inner membrane that drives transmembrane transport and the ATP synthase. Cytochrome c oxidase is the component of the respiratory chain that catalyzes the reduction of oxygen to water. Electrons originating from reduced cytochrome c in the intermembrane space (IMS) are transferred via the dinuclear copper A center (CU(A)) of Cox2 and heme A of Cox1 to the active site in Cox1, a binuclear center (BNC) formed by heme A3 and copper B (CU(B)). The BNC reduces molecular oxygen to 2 water molecules using 4 electrons from cytochrome c in the IMS and 4 protons from the mitochondrial matrix. The polypeptide is Cytochrome c oxidase subunit 4, mitochondrial (cox-4) (Neurospora crassa (strain ATCC 24698 / 74-OR23-1A / CBS 708.71 / DSM 1257 / FGSC 987)).